Consider the following 149-residue polypeptide: uncharacterized protein (149 aa).

This is an uncharacterized protein from Acanthamoeba polyphaga (Amoeba).